Reading from the N-terminus, the 734-residue chain is Photosystem I P700 chlorophyll a apoprotein A2 (734 aa).

8 helical membrane-spanning segments follow: residues 46 to 69, 135 to 158, 175 to 199, 273 to 291, 330 to 353, 369 to 395, 417 to 439, and 517 to 535; these read IFASHFGQLAIIFLWTSGNLFHVA, LYNGSMFLLFIATLALFAGWLHLE, LNHHLSALFGLSSLAWSGHLIHVAI, IAHHHLAIAVLFIVAGHMY, LHFQLGLALASLGVITSLVAQHMY, AALYTHHQYIAGFIMTGAFAHGAIFFI, AIISHLSWVTLFLGFHTLGLYVH, and FLVHHAIALGLHTTTLILV. The [4Fe-4S] cluster site is built by Cys559 and Cys568. The next 2 helical transmembrane spans lie at 575–596 and 643–665; these read AFYLAVFWMLNTIGWTTFYWHW and LAVWGWMFLFGHLVWATGFMFLI. His654, Met662, and Tyr670 together coordinate chlorophyll a. Trp671 serves as a coordination point for phylloquinone. The helical transmembrane segment at 707 to 727 threads the bilayer; it reads LVGLAHFSVGYVFTYAAFLIA.

This sequence belongs to the PsaA/PsaB family. In terms of assembly, the PsaA/B heterodimer binds the P700 chlorophyll special pair and subsequent electron acceptors. PSI consists of a core antenna complex that captures photons, and an electron transfer chain that converts photonic excitation into a charge separation. The eukaryotic PSI reaction center is composed of at least 11 subunits. P700 is a chlorophyll a/chlorophyll a' dimer, A0 is one or more chlorophyll a, A1 is one or both phylloquinones and FX is a shared 4Fe-4S iron-sulfur center. serves as cofactor.

The protein localises to the plastid. It localises to the chloroplast thylakoid membrane. The enzyme catalyses reduced [plastocyanin] + hnu + oxidized [2Fe-2S]-[ferredoxin] = oxidized [plastocyanin] + reduced [2Fe-2S]-[ferredoxin]. Functionally, psaA and PsaB bind P700, the primary electron donor of photosystem I (PSI), as well as the electron acceptors A0, A1 and FX. PSI is a plastocyanin/cytochrome c6-ferredoxin oxidoreductase, converting photonic excitation into a charge separation, which transfers an electron from the donor P700 chlorophyll pair to the spectroscopically characterized acceptors A0, A1, FX, FA and FB in turn. Oxidized P700 is reduced on the lumenal side of the thylakoid membrane by plastocyanin or cytochrome c6. This is Photosystem I P700 chlorophyll a apoprotein A2 from Euglena gracilis.